The chain runs to 215 residues: Small ribosomal subunit protein eS1 (215 aa).

A disordered region spans residues 195-215 (SGMQEPQKNEPAPGGEAIAQN).

Belongs to the eukaryotic ribosomal protein eS1 family.

This Thermoplasma acidophilum (strain ATCC 25905 / DSM 1728 / JCM 9062 / NBRC 15155 / AMRC-C165) protein is Small ribosomal subunit protein eS1.